The following is a 401-amino-acid chain: Chalcone synthase 1 (401 aa).

The active site involves C168.

This sequence belongs to the thiolase-like superfamily. Chalcone/stilbene synthases family.

It carries out the reaction (E)-4-coumaroyl-CoA + 3 malonyl-CoA + 3 H(+) = 2',4,4',6'-tetrahydroxychalcone + 3 CO2 + 4 CoA. It functions in the pathway secondary metabolite biosynthesis; flavonoid biosynthesis. In terms of biological role, the primary product of this enzyme is 4,2',4',6'-tetrahydroxychalcone (also termed naringenin-chalcone or chalcone) which can under specific conditions spontaneously isomerize into naringenin. This Sorghum bicolor (Sorghum) protein is Chalcone synthase 1 (CHS1).